The chain runs to 1138 residues: Protein RECOGNITION OF PERONOSPORA PARASITICA 7 (1138 aa).

In terms of domain architecture, NB-ARC spans 166–422 (EENVKKLVGY…CNYVLSLSFE (257 aa)). Residue 189-196 (GMGGLGKT) participates in ATP binding. 19 LRR repeats span residues 544 to 565 (QYPT…SLVV), 566 to 581 (VTLG…FTRL), 582 to 606 (ELLR…IGKL), 607 to 631 (IHLR…NLKL), 655 to 680 (MQEL…NLVK), 681 to 705 (LETL…RLRT), 707 to 726 (TIEL…IGGL), 727 to 752 (KYLE…VFDF), 754 to 774 (HLKR…QHFP), 775 to 797 (SHLT…ILEK), 798 to 825 (LLQL…GFPQ), 847 to 871 (MPLL…HLPS), 873 to 893 (LTAI…LERL), 894 to 918 (VHLK…GFPQ), 940 to 963 (MPRL…GFPQ), 1028 to 1050 (LEKL…RMVC), 1055 to 1078 (FPQL…QGSM), 1079 to 1103 (PLLH…RFIY), and 1115 to 1138 (KKRL…EFDD).

Belongs to the disease resistance NB-LRR family.

Its function is as follows. Disease resistance protein required for incompatible interactions with avirulent strains of Hyaloperonospora arabidopsidis (downy mildew), isolate Hpa-Hiks1 in cv. Columbia. This chain is Protein RECOGNITION OF PERONOSPORA PARASITICA 7, found in Arabidopsis thaliana (Mouse-ear cress).